Reading from the N-terminus, the 621-residue chain is Signal recognition particle receptor subunit alpha homolog (621 aa).

Positions 1-158 are SRX; it reads MFDQLAVFTP…KKFEQYFRIK (158 aa). Residues 167–217 form a disordered region; that stretch reads HINPDNFTKNGSVPQSHNKNTKKKLRDTKGKKQSTGNVGSGRKWGRDGGML. The segment covering 171–183 has biased composition (polar residues); sequence DNFTKNGSVPQSH. The segment covering 185-198 has biased composition (basic residues); it reads KNTKKKLRDTKGKK. Ser-239 is modified (phosphoserine). Residues 398 to 620 form an NG domain region; that stretch reads YVFSIVGVNG…SVKWAVNTLM (223 aa). GTP contacts are provided by residues 404 to 411 and 510 to 514; these read GVNGVGKS and DTAGR. Position 523 is a phosphoserine (Ser-523). 572-575 is a GTP binding site; sequence SKCD.

It belongs to the GTP-binding SRP family. As to quaternary structure, heterodimer of an alpha and a beta chain.

It localises to the endoplasmic reticulum membrane. Its function is as follows. Component of the SRP (signal recognition particle) receptor (SR). Ensures, in conjunction with the signal recognition particle, the correct targeting of the nascent secretory proteins to the endoplasmic reticulum membrane system. GTP hydrolysis may enhance the fidelity of and provide unidirectionality to the targeting reaction. It is important but not essential for cell growth. May be directly involved in mitochondrial protein import. In Saccharomyces cerevisiae (strain ATCC 204508 / S288c) (Baker's yeast), this protein is Signal recognition particle receptor subunit alpha homolog (SRP101).